The following is a 45-amino-acid chain: uncharacterized protein (45 aa).

It belongs to the asfivirus C62L family.

This is an uncharacterized protein from Ornithodoros (relapsing fever ticks).